Reading from the N-terminus, the 425-residue chain is Glutamyl-tRNA(Gln) amidotransferase subunit A (425 aa).

Residues K29 and S104 each act as charge relay system in the active site. S128 functions as the Acyl-ester intermediate in the catalytic mechanism.

Belongs to the amidase family. GatA subfamily. As to quaternary structure, heterotrimer of A, B and C subunits.

The catalysed reaction is L-glutamyl-tRNA(Gln) + L-glutamine + ATP + H2O = L-glutaminyl-tRNA(Gln) + L-glutamate + ADP + phosphate + H(+). Its function is as follows. Allows the formation of correctly charged Gln-tRNA(Gln) through the transamidation of misacylated Glu-tRNA(Gln) in organisms which lack glutaminyl-tRNA synthetase. The reaction takes place in the presence of glutamine and ATP through an activated gamma-phospho-Glu-tRNA(Gln). This is Glutamyl-tRNA(Gln) amidotransferase subunit A from Haloarcula marismortui (strain ATCC 43049 / DSM 3752 / JCM 8966 / VKM B-1809) (Halobacterium marismortui).